The primary structure comprises 103 residues: Integration host factor subunit beta (103 aa).

The segment at 62-81 (RNPKTGESVALPGKHVPHFK) is disordered.

Belongs to the bacterial histone-like protein family. In terms of assembly, heterodimer of an alpha and a beta chain.

In terms of biological role, this protein is one of the two subunits of integration host factor, a specific DNA-binding protein that functions in genetic recombination as well as in transcriptional and translational control. The sequence is that of Integration host factor subunit beta from Xanthomonas campestris pv. campestris (strain B100).